A 460-amino-acid chain; its full sequence is NADH-ubiquinone oxidoreductase chain 4 (460 aa).

Transmembrane regions (helical) follow at residues 20–42, 61–81, 93–113, 114–134, 148–168, 195–215, 225–245, 258–278, 285–304, 308–330, 351–371, and 394–414; these read PKWL…LMWF, PLST…ILAS, QRLY…AFGA, TEII…LIII, TYFL…LLLL, IWWA…GVHL, PVAG…YGMM, LAYP…SICL, SLIA…GILI, WGFS…LFCL, IIFP…LALP, and ILLT…MFLM.

The protein belongs to the complex I subunit 4 family.

The protein resides in the mitochondrion membrane. The catalysed reaction is a ubiquinone + NADH + 5 H(+)(in) = a ubiquinol + NAD(+) + 4 H(+)(out). Core subunit of the mitochondrial membrane respiratory chain NADH dehydrogenase (Complex I) that is believed to belong to the minimal assembly required for catalysis. Complex I functions in the transfer of electrons from NADH to the respiratory chain. The immediate electron acceptor for the enzyme is believed to be ubiquinone. The protein is NADH-ubiquinone oxidoreductase chain 4 (MT-ND4) of Carassius auratus (Goldfish).